The sequence spans 327 residues: GPI-linked NAD(P)(+)--arginine ADP-ribosyltransferase 1 (327 aa).

The signal sequence occupies residues 1-22 (MWVPAVANLLLLSLGLLEAIQA). Cystine bridges form between cysteine 53–cysteine 277 and cysteine 174–cysteine 224. Residue asparagine 65 is glycosylated (N-linked (GlcNAc...) asparagine). The TR mART core domain occupies 73 to 273 (KVYADGWALA…IYLKALGKRS (201 aa)). Residues tyrosine 121 and arginine 179 each contribute to the NAD(+) site. Catalysis depends on residues arginine 179 and serine 202. Serine 233 lines the NAD(+) pocket. Glutamate 240 is a catalytic residue. Residue asparagine 253 is glycosylated (N-linked (GlcNAc...) asparagine). The GPI-anchor amidated serine moiety is linked to residue serine 295. Residues 296–327 (ASAQERLSTAWSLLLLLAFLAVGPFPGSPGLF) constitute a propeptide, removed in mature form.

It belongs to the Arg-specific ADP-ribosyltransferase family. Primarily in skeletal and cardiac muscle.

It localises to the sarcoplasmic reticulum membrane. The enzyme catalyses L-arginyl-[protein] + NAD(+) = N(omega)-(ADP-D-ribosyl)-L-arginyl-[protein] + nicotinamide + H(+). Functionally, has ADP-ribosyltransferase activity toward GLP1R. The sequence is that of GPI-linked NAD(P)(+)--arginine ADP-ribosyltransferase 1 (ART1) from Oryctolagus cuniculus (Rabbit).